A 309-amino-acid polypeptide reads, in one-letter code: Tagatose-6-phosphate kinase 1 (309 aa).

It belongs to the carbohydrate kinase PfkB family. LacC subfamily.

It carries out the reaction D-tagatofuranose 6-phosphate + ATP = D-tagatofuranose 1,6-bisphosphate + ADP + H(+). Its pathway is carbohydrate metabolism; D-tagatose 6-phosphate degradation; D-glyceraldehyde 3-phosphate and glycerone phosphate from D-tagatose 6-phosphate: step 1/2. This Streptococcus agalactiae serotype III (strain NEM316) protein is Tagatose-6-phosphate kinase 1.